We begin with the raw amino-acid sequence, 23 residues long: Mu-conotoxin-like SxIIIB (23 aa).

Q1 carries the pyrrolidone carboxylic acid modification. 3 disulfides stabilise this stretch: C3/C16, C4/C21, and C11/C22. The residue at position 23 (A23) is an Alanine amide.

Belongs to the conotoxin M superfamily. Expressed by the venom duct.

The protein localises to the secreted. Its function is as follows. Mu-conotoxins block voltage-gated sodium channels (Nav). The sequence is that of Mu-conotoxin-like SxIIIB from Conus striolatus (Cone snail).